The following is a 269-amino-acid chain: Cytochrome c oxidase subunit 3 (269 aa).

7 helical membrane passes run 13-33, 46-66, 90-110, 138-160, 167-187, 207-227, and 245-265; these read PFHL…LLVL, NGHY…SFWF, GVIL…WAFF, PLLN…HSII, ALYG…FQGV, FGTG…LVAL, and AGIL…ISIY.

Belongs to the cytochrome c oxidase subunit 3 family. As to quaternary structure, component of the cytochrome c oxidase (complex IV, CIV), a multisubunit enzyme composed of a catalytic core of 3 subunits and several supernumerary subunits. The complex exists as a monomer or a dimer and forms supercomplexes (SCs) in the inner mitochondrial membrane with ubiquinol-cytochrome c oxidoreductase (cytochrome b-c1 complex, complex III, CIII).

Its subcellular location is the mitochondrion inner membrane. The catalysed reaction is 4 Fe(II)-[cytochrome c] + O2 + 8 H(+)(in) = 4 Fe(III)-[cytochrome c] + 2 H2O + 4 H(+)(out). Its function is as follows. Component of the cytochrome c oxidase, the last enzyme in the mitochondrial electron transport chain which drives oxidative phosphorylation. The respiratory chain contains 3 multisubunit complexes succinate dehydrogenase (complex II, CII), ubiquinol-cytochrome c oxidoreductase (cytochrome b-c1 complex, complex III, CIII) and cytochrome c oxidase (complex IV, CIV), that cooperate to transfer electrons derived from NADH and succinate to molecular oxygen, creating an electrochemical gradient over the inner membrane that drives transmembrane transport and the ATP synthase. Cytochrome c oxidase is the component of the respiratory chain that catalyzes the reduction of oxygen to water. Electrons originating from reduced cytochrome c in the intermembrane space (IMS) are transferred via the dinuclear copper A center (CU(A)) of subunit 2 and heme A of subunit 1 to the active site in subunit 1, a binuclear center (BNC) formed by heme A3 and copper B (CU(B)). The BNC reduces molecular oxygen to 2 water molecules using 4 electrons from cytochrome c in the IMS and 4 protons from the mitochondrial matrix. This Pyricularia grisea (Crabgrass-specific blast fungus) protein is Cytochrome c oxidase subunit 3 (COX3).